The sequence spans 89 residues: Small ribosomal subunit protein uS15 (89 aa).

This sequence belongs to the universal ribosomal protein uS15 family. Part of the 30S ribosomal subunit. Forms a bridge to the 50S subunit in the 70S ribosome, contacting the 23S rRNA.

One of the primary rRNA binding proteins, it binds directly to 16S rRNA where it helps nucleate assembly of the platform of the 30S subunit by binding and bridging several RNA helices of the 16S rRNA. Functionally, forms an intersubunit bridge (bridge B4) with the 23S rRNA of the 50S subunit in the ribosome. This is Small ribosomal subunit protein uS15 from Rhizobium johnstonii (strain DSM 114642 / LMG 32736 / 3841) (Rhizobium leguminosarum bv. viciae).